The chain runs to 1284 residues: Kinesin-like protein KIN-4C (1284 aa).

In terms of domain architecture, Kinesin motor spans 12–364 (SVKVVVNIRP…LKYANRARNI (353 aa)). 91–98 (GQTGSGKT) contacts ATP. Coiled coils occupy residues 407-445 (SAALEELQLLQQKVSLLELKNSELNHELKERELSYEQLA), 561-711 (RDHS…QFRS), and 911-950 (MCKEKEHLICDLKEKVVALNGRIRQLETQVKDLNNQNMLL). Disordered regions lie at residues 1040–1070 (RRQTVSSHLNPNPGSGTTQKSAKSEMASQEK) and 1158–1284 (MSEK…NHLR). Over residues 1043–1070 (TVSSHLNPNPGSGTTQKSAKSEMASQEK) the composition is skewed to polar residues. 2 stretches are compositionally biased toward basic and acidic residues: residues 1158 to 1172 (MSEKEAQETKSRKPL) and 1275 to 1284 (NANEKENHLR).

The protein belongs to the TRAFAC class myosin-kinesin ATPase superfamily. Kinesin family. KIN-4 subfamily. As to quaternary structure, homodimer.

Its function is as follows. Microtubule-dependent motor protein involved in the control of the oriented deposition of cellulose microfibrils. This is Kinesin-like protein KIN-4C from Oryza sativa subsp. japonica (Rice).